The chain runs to 62 residues: Photosystem II reaction center protein Z (62 aa).

The next 2 membrane-spanning stretches (helical) occupy residues 8–28 and 41–61; these read AVFALIATSSILLISVPVVFA and FSGTSLWIGLVFLVAILNSLI.

The protein belongs to the PsbZ family. In terms of assembly, PSII is composed of 1 copy each of membrane proteins PsbA, PsbB, PsbC, PsbD, PsbE, PsbF, PsbH, PsbI, PsbJ, PsbK, PsbL, PsbM, PsbT, PsbY, PsbZ, Psb30/Ycf12, at least 3 peripheral proteins of the oxygen-evolving complex and a large number of cofactors. It forms dimeric complexes.

Its subcellular location is the plastid. The protein localises to the chloroplast thylakoid membrane. In terms of biological role, may control the interaction of photosystem II (PSII) cores with the light-harvesting antenna, regulates electron flow through the 2 photosystem reaction centers. PSII is a light-driven water plastoquinone oxidoreductase, using light energy to abstract electrons from H(2)O, generating a proton gradient subsequently used for ATP formation. This is Photosystem II reaction center protein Z from Calycanthus floridus var. glaucus (Eastern sweetshrub).